The following is a 134-amino-acid chain: MSSVDLDDLVEKICALDLCSAAALVEKIEEKLGFPKGGLMASVSAAGSASQGAGGAAEAEKTEFIVMFDGYAADKKIAVIKAVRECTSLGLKEAKDFVEQEGSRELIEGKKYKKAEAEEVKKKLEDAGAQVSLK.

Belongs to the bacterial ribosomal protein bL12 family. In terms of assembly, homodimer. Part of the ribosomal stalk of the 50S ribosomal subunit. Forms a multimeric L10(L12)X complex, where L10 forms an elongated spine to which 2 to 4 L12 dimers bind in a sequential fashion. Binds GTP-bound translation factors.

Forms part of the ribosomal stalk which helps the ribosome interact with GTP-bound translation factors. Is thus essential for accurate translation. The chain is Large ribosomal subunit protein bL12 from Anaplasma phagocytophilum (strain HZ).